Here is a 129-residue protein sequence, read N- to C-terminus: Follitropin subunit beta (129 aa).

A signal peptide spans 1-20; the sequence is MKTAQFYVLFFCWKAIWCNG. 6 disulfide bridges follow: C21–C69, C35–C84, C38–C122, C46–C100, C50–C102, and C105–C112. N25 and N42 each carry an N-linked (GlcNAc...) asparagine glycan.

The protein belongs to the glycoprotein hormones subunit beta family. In terms of assembly, heterodimer. The active follitropin is a heterodimer composed of an alpha chain/CGA shared with other hormones and a unique beta chain/FSHB shown here.

The protein localises to the secreted. Its function is as follows. Together with the alpha chain CGA constitutes follitropin, the follicle-stimulating hormone, and provides its biological specificity to the hormone heterodimer. Binds FSHR, a G protein-coupled receptor, on target cells to activate downstream signaling pathways. Follitropin is involved in follicle development and spermatogenesis in reproductive organs. The protein is Follitropin subunit beta (FSHB) of Trichosurus vulpecula (Brush-tailed possum).